A 75-amino-acid polypeptide reads, in one-letter code: UPF0352 protein YejL (75 aa).

Belongs to the UPF0352 family.

The sequence is that of UPF0352 protein YejL from Shigella flexneri.